The following is a 379-amino-acid chain: Cobalt-precorrin-5B C(1)-methyltransferase (379 aa).

Belongs to the CbiD family.

It carries out the reaction Co-precorrin-5B + S-adenosyl-L-methionine = Co-precorrin-6A + S-adenosyl-L-homocysteine. It functions in the pathway cofactor biosynthesis; adenosylcobalamin biosynthesis; cob(II)yrinate a,c-diamide from sirohydrochlorin (anaerobic route): step 6/10. Functionally, catalyzes the methylation of C-1 in cobalt-precorrin-5B to form cobalt-precorrin-6A. In Salmonella heidelberg (strain SL476), this protein is Cobalt-precorrin-5B C(1)-methyltransferase.